Reading from the N-terminus, the 344-residue chain is Microcin C7 self-immunity protein MccF (344 aa).

The protein belongs to the peptidase S66 family.

In terms of biological role, involved in specific self-immunity to microcin C7. In Escherichia coli, this protein is Microcin C7 self-immunity protein MccF (mccF).